The sequence spans 437 residues: Glutamate-1-semialdehyde 2,1-aminomutase (437 aa).

Lys273 carries the post-translational modification N6-(pyridoxal phosphate)lysine.

This sequence belongs to the class-III pyridoxal-phosphate-dependent aminotransferase family. HemL subfamily. In terms of assembly, homodimer. Requires pyridoxal 5'-phosphate as cofactor.

It is found in the cytoplasm. The enzyme catalyses (S)-4-amino-5-oxopentanoate = 5-aminolevulinate. It participates in porphyrin-containing compound metabolism; protoporphyrin-IX biosynthesis; 5-aminolevulinate from L-glutamyl-tRNA(Glu): step 2/2. This is Glutamate-1-semialdehyde 2,1-aminomutase from Chlamydia felis (strain Fe/C-56) (Chlamydophila felis).